Consider the following 415-residue polypeptide: DNA polymerase IV 2 (415 aa).

Residues Ile7–Gly183 enclose the UmuC domain. Asp11 and Asp101 together coordinate Mg(2+). Glu102 is a catalytic residue.

It belongs to the DNA polymerase type-Y family. As to quaternary structure, monomer. The cofactor is Mg(2+).

It localises to the cytoplasm. It carries out the reaction DNA(n) + a 2'-deoxyribonucleoside 5'-triphosphate = DNA(n+1) + diphosphate. In terms of biological role, poorly processive, error-prone DNA polymerase involved in untargeted mutagenesis. Copies undamaged DNA at stalled replication forks, which arise in vivo from mismatched or misaligned primer ends. These misaligned primers can be extended by PolIV. Exhibits no 3'-5' exonuclease (proofreading) activity. May be involved in translesional synthesis, in conjunction with the beta clamp from PolIII. The sequence is that of DNA polymerase IV 2 (dinB2) from Mesorhizobium japonicum (strain LMG 29417 / CECT 9101 / MAFF 303099) (Mesorhizobium loti (strain MAFF 303099)).